The chain runs to 566 residues: Chondroitin sulfate proteoglycan 5 (566 aa).

An N-terminal signal peptide occupies residues 1 to 30; that stretch reads MGRAGGGGPDWGPPPVLLLLGVTLVLTAGA. The Extracellular segment spans residues 31–423; the sequence is VPARETGSAI…SIITDFQVMC (393 aa). A glycan (O-linked (Xyl...) (chondroitin sulfate) serine) is linked at Ser-38. A disordered region spans residues 56 to 93; sequence ANDTREEAGLPAAGEDETSWTERGSEMAAVGPGVGPEE. An N-linked (GlcNAc...) asparagine glycan is attached at Asn-57. An O-linked (GalNAc...) threonine glycan is attached at Thr-76. A glycan (O-linked (Xyl...) (chondroitin sulfate) serine) is linked at Ser-123. The O-linked (GalNAc...) threonine glycan is linked to Thr-132. Disordered stretches follow at residues 137–173, 218–249, and 263–327; these read DEAL…GPEL, DSEG…TPSW, and ESDF…PPQH. Ser-143 carries O-linked (GalNAc...) serine glycosylation. 3 O-linked (GalNAc...) threonine glycosylation sites follow: Thr-144, Thr-153, and Thr-155. O-linked (GalNAc...) serine glycosylation is found at Ser-156 and Ser-160. Positions 163–173 are enriched in basic and acidic residues; it reads VHDKPSVGPEL. An O-linked (GalNAc...) threonine glycan is attached at Thr-235. Residues 265–301 are interaction with TNC and TNR; the sequence is DFYPTTSFYDDLEEEEEEEEDKDTVGGGDLEDENDLL. Residues 274 to 286 show a composition bias toward acidic residues; that stretch reads DDLEEEEEEEEDK. Residues Asn-355 and Asn-367 are each glycosylated (N-linked (GlcNAc...) asparagine). The region spanning 371-413 is the EGF-like domain; sequence RSVCDLFPSYCHNGGQCYLVENIGAFCRCNTQDYIWHKGMRCE. Intrachain disulfides connect Cys-374/Cys-387, Cys-381/Cys-397, and Cys-399/Cys-412. Phosphoserine is present on residues Gly-394 and Phe-396. Phosphothreonine is present on Cys-397. A helical membrane pass occupies residues 424–444; that stretch reads VAVGSAALVLLLLFMMTVFFA. The segment at 442 to 460 is interaction with GOPC; the sequence is FFAKKLYLLKTENTKLRRT. Residues 445–566 lie on the Cytoplasmic side of the membrane; that stretch reads KKLYLLKTEN…GVNCLQNNLT (122 aa). Residues Ser-467, Ser-475, and Ser-477 each carry the phosphoserine modification. Residue Thr-478 is modified to Phosphothreonine. 2 positions are modified to phosphoserine: Ser-483 and Ser-543. A disordered region spans residues 531–566; the sequence is KEEESFNIQNSMSPKLEGGKGDQDDLGVNCLQNNLT.

As to quaternary structure, binds TNR and probably TNC. Interacts with ERBB3 and GOPC. Interacts with MDK; this interaction is independent of the presence of chondroitin sulfate chains and promotes elongation of oligodendroglial precursor-like cells. Post-translationally, N-glycosylated. O-glycosylated; contains chondroitin sulfate glycans. Part-time proteoglycan, expressed in part as a proteoglycan exhibiting chondroitin sulfate glycans and in part as a non-proteoglycan form. The relative amount of both forms depends on tissues and tissue maturation. In the cerebellum the 2 forms coexist while in the cerebrum the proteoglycan form is predominant. In terms of processing, phosphorylated; in intracellular and extracellular parts. As to expression, expressed in olfactory bulb, hippocampus, brain stem, spinal cord, cerebrum and cerebellum. Expressed by Purkinje cells in the cerebellum (at protein level). Expressed in immature and mature cerebellum (isoform 1, isoform 2 and isoform 3).

It localises to the cell membrane. The protein resides in the synaptic cell membrane. Its subcellular location is the endoplasmic reticulum membrane. It is found in the golgi apparatus membrane. The protein localises to the cell surface. It localises to the secreted. May function as a growth and differentiation factor involved in neuritogenesis. May induce ERBB3 activation. The protein is Chondroitin sulfate proteoglycan 5 (Cspg5) of Mus musculus (Mouse).